We begin with the raw amino-acid sequence, 465 residues long: MSSELMFNYTFSWPAGPKDVILTGTFDDWRGTLPLVKTAKGNFEITMPVKLANKDDTFQFKFIVDGVWCVSDSYKKEHVSEGIENNFLQITDLVETQEVAGASRIPEAGGLLCGKPPRSAGPPSTSNRKKNKRNNKKRRSKLKKKSTKNNKKSNESLDDNEEEDGVTGTTTEDVTGTSREETPLAEPTNVSKEAPGNFHILPIDQSADTTQSNGIIGGPGPVLVPNPGEIKEFTEIRDVDARELNERLNKKEEVPEPVAGPIVESSVTEKSPALPQADDPIVETKEVAHNVQELTPQVEAVTPLINEPEPLPTPEAQISIPESSKVEPVEGSLQSKLVEKRESTEGVLDGSKKVENKAKKDEEVFTLDPIVNKAPKLPLTDEQTAEGRKSPAVSEEKEKKKKQEKGSKEVKRSETSKEKKPSAKEVKKQTVKAPKKQTASPLSSSTEEPKKKKTGFFGKLKKLFK.

2 disordered regions span residues 107–227 (EAGG…VPNP) and 247–276 (RLNK…ALPQ). Basic residues predominate over residues 127–151 (NRKKNKRNNKKRRSKLKKKSTKNNK). A phosphoserine mark is found at S153 and S156. Positions 156-165 (SLDDNEEEDG) are enriched in acidic residues. Residues 160-161 (NE) form an X-DNA-binding region. A compositionally biased stretch (low complexity) spans 166-177 (VTGTTTEDVTGT). A Phosphothreonine modification is found at T182. Phosphoserine is present on S271. T295 carries the phosphothreonine modification. The tract at residues 300-465 (AVTPLINEPE…FFGKLKKLFK (166 aa)) is disordered. Phosphoserine is present on residues S319 and S343. The span at 337–363 (LVEKRESTEGVLDGSKKVENKAKKDEE) shows a compositional bias: basic and acidic residues. T366 is modified (phosphothreonine). 2 stretches are compositionally biased toward basic and acidic residues: residues 385 to 398 (AEGR…EEKE) and 404 to 428 (EKGS…EVKK). S394 carries the phosphoserine modification. S440 carries the post-translational modification Phosphoserine. Residues 451-465 (KKKTGFFGKLKKLFK) are compositionally biased toward basic residues.

Belongs to the CRP1/MDG1 family. In terms of processing, cleaved in the vicinity of position 160 to give an X-DNA-binding N-terminal subpeptide and a non-DNA-binding C-terminal subpeptide.

In terms of biological role, cruciform DNA-binding protein which exerts an enhancing effect on the cleavage of cruciform DNA (X-DNA) by endonuclease VII from bacteriophage T4. This Saccharomyces cerevisiae (strain ATCC 204508 / S288c) (Baker's yeast) protein is Cruciform DNA-recognizing protein 1 (CRP1).